Consider the following 103-residue polypeptide: Large ribosomal subunit protein uL24 (103 aa).

It belongs to the universal ribosomal protein uL24 family. As to quaternary structure, part of the 50S ribosomal subunit.

Functionally, one of two assembly initiator proteins, it binds directly to the 5'-end of the 23S rRNA, where it nucleates assembly of the 50S subunit. Its function is as follows. One of the proteins that surrounds the polypeptide exit tunnel on the outside of the subunit. This chain is Large ribosomal subunit protein uL24, found in Haemophilus influenzae (strain 86-028NP).